Here is a 300-residue protein sequence, read N- to C-terminus: D-alanine--D-alanine ligase (300 aa).

The ATP-grasp domain occupies 99 to 293 (KKILKYANIN…FAELLNSIVK (195 aa)). An ATP-binding site is contributed by 126-181 (IEKIGYPVFVKPNSGGSSVATNLVKNKEGIKEAVELALKYDKEVMIENYTKGEEIT). Positions 248, 260, and 262 each coordinate Mg(2+).

This sequence belongs to the D-alanine--D-alanine ligase family. Mg(2+) is required as a cofactor. The cofactor is Mn(2+).

The protein resides in the cytoplasm. It carries out the reaction 2 D-alanine + ATP = D-alanyl-D-alanine + ADP + phosphate + H(+). Its pathway is cell wall biogenesis; peptidoglycan biosynthesis. In terms of biological role, cell wall formation. The polypeptide is D-alanine--D-alanine ligase (Clostridium botulinum (strain Loch Maree / Type A3)).